The sequence spans 290 residues: Zinc finger AN1 and C2H2 domain-containing stress-associated protein 16 (290 aa).

2 consecutive AN1-type zinc fingers follow at residues 7–55 (PNLG…QKDV) and 95–145 (VTKK…KPES). Zn(2+)-binding residues include Cys13, Cys18, Cys28, Cys31, Cys36, His39, His45, Cys47, Cys101, Cys106, Cys118, Cys121, Cys126, His129, His135, and Cys137. 2 consecutive C2H2-type zinc fingers follow at residues 224–247 (EQCVQCPARFSTVGALIEHCEKSH) and 261–284 (DVCPKCSKAFRDPVLLVEHVERDH).

May be involved in environmental stress response. In Oryza sativa subsp. japonica (Rice), this protein is Zinc finger AN1 and C2H2 domain-containing stress-associated protein 16 (SAP16).